The chain runs to 455 residues: P2X purinoceptor 5 (455 aa).

Over 1-30 (MGQAAWKGFVLSLFDYKTAKFVVAKSKKVG) the chain is Cytoplasmic. Residues 31–50 (LLYRVLQLTILLYLLIWVFL) form a helical membrane-spanning segment. The Extracellular portion of the chain corresponds to 51-339 (IKKSYQDIDT…KFSIIPTVIN (289 aa)). 69–71 (KVK) is an ATP binding site. Asn-77 carries N-linked (GlcNAc...) asparagine glycosylation. Intrachain disulfides connect Cys-118–Cys-169, Cys-129–Cys-152, and Cys-135–Cys-163. A glycan (N-linked (GlcNAc...) asparagine) is linked at Asn-157. Thr-189 is an ATP binding site. The N-linked (GlcNAc...) asparagine glycan is linked to Asn-202. Disulfide bonds link Cys-220-Cys-229 and Cys-263-Cys-272. ATP-binding positions include 294-296 (NFR) and Lys-314. A helical membrane pass occupies residues 340-362 (IGSGLALMGAGAFFCDLVLIYLI). The Cytoplasmic segment spans residues 363-455 (RKSEFYRDKK…PSQILQTVKT (93 aa)).

Belongs to the P2X receptor family. In terms of assembly, functional P2XRs are organized as homomeric and heteromeric trimers. Homotrimer. Forms heterotrimer with P2RX1. Expressed in a number of tissues, with highest levels detected in heart and kidney.

The protein localises to the cell membrane. The catalysed reaction is Na(+)(in) = Na(+)(out). It carries out the reaction Ca(2+)(in) = Ca(2+)(out). The enzyme catalyses chloride(in) = chloride(out). Its activity is regulated as follows. Activated by ATP. Slowly desensitizing. Not activated by ATP agonist alpha/beta-methylene-ATP. Highly sensitive to the antagonists suramin and PPADS. Its function is as follows. ATP-gated nonselective transmembrane cation channel permeable to potassium, sodium and calcium. Unlike other P2RX receptors, the P2X5 receptor is also permeable to chloride. Acts as an important regulator of inflammatory-related bone loss and osteoclast multinucleation. The chain is P2X purinoceptor 5 from Mus musculus (Mouse).